We begin with the raw amino-acid sequence, 483 residues long: SWI/SNF-related matrix-associated actin-dependent regulator of chromatin subfamily D member 3 (483 aa).

A2 carries the post-translational modification N-acetylalanine. Residues 26 to 102 form a disordered region; it reads VRPGMPSGAR…ARSRSAKRRK (77 aa). Over residues 78–87 the composition is skewed to low complexity; it reads QSQAQSQGQP. Residue S178 is modified to Phosphoserine. Positions 258–335 constitute an SWIB/MDM2 domain; the sequence is YQPPQFKLDP…PQRLTALLLP (78 aa).

The protein belongs to the SMARCD family. As to quaternary structure, component of the multiprotein chromatin-remodeling complexes SWI/SNF: SWI/SNF-A (BAF), SWI/SNF-B (PBAF) and related complexes. The canonical complex contains a catalytic subunit (either SMARCA4/BRG1/BAF190A or SMARCA2/BRM/BAF190B) and at least SMARCE1, ACTL6A/BAF53, SMARCC1/BAF155, SMARCC2/BAF170, and SMARCB1/SNF5/BAF47. Other subunits specific to each of the complexes may also be present permitting several possible combinations developmentally and tissue specific. Component of the BAF complex, which includes at least actin (ACTB), ARID1A/BAF250A, ARID1B/BAF250B, SMARCA2/BRM, SMARCA4/BRG1/BAF190A, ACTL6A/BAF53, ACTL6B/BAF53B, SMARCE1/BAF57, SMARCC1/BAF155, SMARCC2/BAF170, SMARCB1/SNF5/INI1, and one or more SMARCD1/BAF60A, SMARCD2/BAF60B, or SMARCD3/BAF60C. In muscle cells, the BAF complex also contains DPF3. Component of neural progenitors-specific chromatin remodeling complex (npBAF complex) composed of at least, ARID1A/BAF250A or ARID1B/BAF250B, SMARCD1/BAF60A, SMARCD3/BAF60C, SMARCA2/BRM/BAF190B, SMARCA4/BRG1/BAF190A, SMARCB1/BAF47, SMARCC1/BAF155, SMARCE1/BAF57, SMARCC2/BAF170, PHF10/BAF45A, ACTL6A/BAF53A and actin. Component of neuron-specific chromatin remodeling complex (nBAF complex) composed of at least, ARID1A/BAF250A or ARID1B/BAF250B, SMARCD1/BAF60A, SMARCD3/BAF60C, SMARCA2/BRM/BAF190B, SMARCA4/BRG1/BAF190A, SMARCB1/BAF47, SMARCC1/BAF155, SMARCE1/BAF57, SMARCC2/BAF170, DPF1/BAF45B, DPF3/BAF45C, ACTL6B/BAF53B and actin. May be a component of the SWI/SNF-B (PBAF) chromatin remodeling complex, at least composed of SMARCA4/BRG1, SMARCB1/BAF47/SNF5, ACTL6A/BAF53A or ACTL6B/BAF53B, SMARCE1/BAF57, SMARCD1/BAF60A, SMARCD2/BAF60B, perhaps SMARCD3/BAF60C, SMARCC1/BAF155, SMARCC2/BAF170, PBRM1/BAF180, ARID2/BAF200 and actin. Interacts with SMARCA4/BRG1/BAF190A. Component of SWI/SNF (GBAF) subcomplex, which includes at least BICRA or BICRAL (mutually exclusive), BRD9, SS18, SMARCA2/BRM, SMARCA4/BRG1/BAF190A, ACTL6A/BAF53, SMARCC1/BAF155, and SMARCD1/BAF60A. The precise distribution of the related SMARCD1, SMARCD2 and SMARCD3 proteins among these and other SWI/SNF nucleosome-remodeling complexes is not fully known. May allow recruitment of SWI/SNF containing complexes specifically to promoters where these factors are located. Also interacts with several nuclear receptors including PPARG/NR1C3, RXRA/NR1F1, ESR1, NR5A1, NR5A2/LRH1 and other transcriptional activators including the HLH protein SREBF1/SREBP1 and the homeobox protein PBX1. Interacts with PRDM1/BLIMP1. In terms of tissue distribution, isoform 2 and isoform 1 are expressed in brain, heart, kidney, placenta, prostate, salivary gland, spleen, testis, thyroid, trachea and uterus. Isoform 1 is also expressed in skeletal muscle and adipose tissue.

Its subcellular location is the nucleus. Its function is as follows. Involved in transcriptional activation and repression of select genes by chromatin remodeling (alteration of DNA-nucleosome topology). Component of SWI/SNF chromatin remodeling complexes that carry out key enzymatic activities, changing chromatin structure by altering DNA-histone contacts within a nucleosome in an ATP-dependent manner. Stimulates nuclear receptor mediated transcription. Belongs to the neural progenitors-specific chromatin remodeling complex (npBAF complex) and the neuron-specific chromatin remodeling complex (nBAF complex). During neural development a switch from a stem/progenitor to a postmitotic chromatin remodeling mechanism occurs as neurons exit the cell cycle and become committed to their adult state. The transition from proliferating neural stem/progenitor cells to postmitotic neurons requires a switch in subunit composition of the npBAF and nBAF complexes. As neural progenitors exit mitosis and differentiate into neurons, npBAF complexes which contain ACTL6A/BAF53A and PHF10/BAF45A, are exchanged for homologous alternative ACTL6B/BAF53B and DPF1/BAF45B or DPF3/BAF45C subunits in neuron-specific complexes (nBAF). The npBAF complex is essential for the self-renewal/proliferative capacity of the multipotent neural stem cells. The nBAF complex along with CREST plays a role regulating the activity of genes essential for dendrite growth. This chain is SWI/SNF-related matrix-associated actin-dependent regulator of chromatin subfamily D member 3 (SMARCD3), found in Homo sapiens (Human).